Consider the following 207-residue polypeptide: Cytochrome c biogenesis ATP-binding export protein CcmA (207 aa).

Positions 4–207 (LEARELLCER…RISLTQTRAA (204 aa)) constitute an ABC transporter domain. 36–43 (GSNGAGKT) lines the ATP pocket.

The protein belongs to the ABC transporter superfamily. CcmA exporter (TC 3.A.1.107) family. In terms of assembly, the complex is composed of two ATP-binding proteins (CcmA) and two transmembrane proteins (CcmB).

The protein localises to the cell inner membrane. It catalyses the reaction heme b(in) + ATP + H2O = heme b(out) + ADP + phosphate + H(+). Part of the ABC transporter complex CcmAB involved in the biogenesis of c-type cytochromes; once thought to export heme, this seems not to be the case, but its exact role is uncertain. Responsible for energy coupling to the transport system. This Shigella sonnei (strain Ss046) protein is Cytochrome c biogenesis ATP-binding export protein CcmA.